Consider the following 1356-residue polypeptide: DNA-directed RNA polymerase subunit beta (1356 aa).

It belongs to the RNA polymerase beta chain family. The RNAP catalytic core consists of 2 alpha, 1 beta, 1 beta' and 1 omega subunit. When a sigma factor is associated with the core the holoenzyme is formed, which can initiate transcription.

The catalysed reaction is RNA(n) + a ribonucleoside 5'-triphosphate = RNA(n+1) + diphosphate. Functionally, DNA-dependent RNA polymerase catalyzes the transcription of DNA into RNA using the four ribonucleoside triphosphates as substrates. This is DNA-directed RNA polymerase subunit beta from Caulobacter vibrioides (strain ATCC 19089 / CIP 103742 / CB 15) (Caulobacter crescentus).